The sequence spans 221 residues: Deoxyribose-phosphate aldolase 1 (221 aa).

Aspartate 89 (proton donor/acceptor) is an active-site residue. The active-site Schiff-base intermediate with acetaldehyde is lysine 152. Lysine 181 (proton donor/acceptor) is an active-site residue.

Belongs to the DeoC/FbaB aldolase family. DeoC type 1 subfamily.

It localises to the cytoplasm. The enzyme catalyses 2-deoxy-D-ribose 5-phosphate = D-glyceraldehyde 3-phosphate + acetaldehyde. Its pathway is carbohydrate degradation; 2-deoxy-D-ribose 1-phosphate degradation; D-glyceraldehyde 3-phosphate and acetaldehyde from 2-deoxy-alpha-D-ribose 1-phosphate: step 2/2. Its function is as follows. Catalyzes a reversible aldol reaction between acetaldehyde and D-glyceraldehyde 3-phosphate to generate 2-deoxy-D-ribose 5-phosphate. This Oceanobacillus iheyensis (strain DSM 14371 / CIP 107618 / JCM 11309 / KCTC 3954 / HTE831) protein is Deoxyribose-phosphate aldolase 1.